A 332-amino-acid chain; its full sequence is Glycerol-3-phosphate dehydrogenase [NAD(P)+] (332 aa).

5 residues coordinate NADPH: Ser-11, Trp-12, Arg-32, Arg-33, and Lys-106. The sn-glycerol 3-phosphate site is built by Lys-106 and Gly-136. Residue Ala-140 participates in NADPH binding. Lys-191, Asp-244, Ser-254, Arg-255, and Asn-256 together coordinate sn-glycerol 3-phosphate. Lys-191 acts as the Proton acceptor in catalysis. Residue Arg-255 coordinates NADPH. NADPH is bound by residues Val-280 and Glu-282.

This sequence belongs to the NAD-dependent glycerol-3-phosphate dehydrogenase family.

The protein localises to the cytoplasm. The catalysed reaction is sn-glycerol 3-phosphate + NAD(+) = dihydroxyacetone phosphate + NADH + H(+). It catalyses the reaction sn-glycerol 3-phosphate + NADP(+) = dihydroxyacetone phosphate + NADPH + H(+). It participates in membrane lipid metabolism; glycerophospholipid metabolism. In terms of biological role, catalyzes the reduction of the glycolytic intermediate dihydroxyacetone phosphate (DHAP) to sn-glycerol 3-phosphate (G3P), the key precursor for phospholipid synthesis. The sequence is that of Glycerol-3-phosphate dehydrogenase [NAD(P)+] from Corynebacterium jeikeium (strain K411).